The chain runs to 405 residues: Arginine biosynthesis bifunctional protein ArgJ, mitochondrial (405 aa).

Positions 174, 200, 211, and 300 each coordinate substrate. Residue threonine 211 is the Nucleophile of the active site.

It belongs to the ArgJ family. In terms of assembly, heterodimer of an alpha and a beta chain. The alpha and beta chains are autoproteolytically processed from a single precursor protein within the mitochondrion.

The protein resides in the mitochondrion matrix. The enzyme catalyses N(2)-acetyl-L-ornithine + L-glutamate = N-acetyl-L-glutamate + L-ornithine. The catalysed reaction is L-glutamate + acetyl-CoA = N-acetyl-L-glutamate + CoA + H(+). The protein operates within amino-acid biosynthesis; L-arginine biosynthesis; L-ornithine and N-acetyl-L-glutamate from L-glutamate and N(2)-acetyl-L-ornithine (cyclic): step 1/1. It functions in the pathway amino-acid biosynthesis; L-arginine biosynthesis; N(2)-acetyl-L-ornithine from L-glutamate: step 1/4. Its function is as follows. Catalyzes two activities which are involved in the cyclic version of arginine biosynthesis: the synthesis of acetylglutamate from glutamate and acetyl-CoA, and of ornithine by transacetylation between acetylornithine and glutamate. In Candida tropicalis (strain ATCC MYA-3404 / T1) (Yeast), this protein is Arginine biosynthesis bifunctional protein ArgJ, mitochondrial.